Consider the following 121-residue polypeptide: Small ribosomal subunit protein bS16 (121 aa).

Residues 85–110 show a composition bias toward basic and acidic residues; sequence REARNNPKKAEPGKKAQERAAERAAK. The disordered stretch occupies residues 85–121; sequence REARNNPKKAEPGKKAQERAAERAAKAAEASEAASAE. Low complexity predominate over residues 111 to 121; sequence AAEASEAASAE.

Belongs to the bacterial ribosomal protein bS16 family.

This Azorhizobium caulinodans (strain ATCC 43989 / DSM 5975 / JCM 20966 / LMG 6465 / NBRC 14845 / NCIMB 13405 / ORS 571) protein is Small ribosomal subunit protein bS16.